We begin with the raw amino-acid sequence, 385 residues long: Meiotic recombination protein SPO11-2 (385 aa).

A Topo IIA-type catalytic domain is found at 24 to 169 (LPPAEVRARI…LGIMASSRGA (146 aa)). Tyr-126 serves as the catalytic O-(5'-phospho-DNA)-tyrosine intermediate. Mg(2+) is bound by residues Glu-219 and Asp-272.

This sequence belongs to the TOP6A family. As to quaternary structure, interacts with TOP6B. Mg(2+) serves as cofactor.

The protein localises to the nucleus. It catalyses the reaction ATP-dependent breakage, passage and rejoining of double-stranded DNA.. Its function is as follows. Required for meiotic recombination. Mediates DNA cleavage that forms the double-strand breaks (DSB) that initiate meiotic recombination. This is Meiotic recombination protein SPO11-2 (SPO11-2) from Oryza sativa subsp. japonica (Rice).